A 638-amino-acid polypeptide reads, in one-letter code: 1-deoxy-D-xylulose-5-phosphate synthase (638 aa).

Residues H72 and 113–115 (GHA) each bind thiamine diphosphate. Mg(2+) is bound at residue D144. Thiamine diphosphate contacts are provided by residues 145-146 (GA), N174, Y287, and E370. N174 contacts Mg(2+).

The protein belongs to the transketolase family. DXPS subfamily. In terms of assembly, homodimer. Mg(2+) is required as a cofactor. Requires thiamine diphosphate as cofactor.

The catalysed reaction is D-glyceraldehyde 3-phosphate + pyruvate + H(+) = 1-deoxy-D-xylulose 5-phosphate + CO2. The protein operates within metabolic intermediate biosynthesis; 1-deoxy-D-xylulose 5-phosphate biosynthesis; 1-deoxy-D-xylulose 5-phosphate from D-glyceraldehyde 3-phosphate and pyruvate: step 1/1. Functionally, catalyzes the acyloin condensation reaction between C atoms 2 and 3 of pyruvate and glyceraldehyde 3-phosphate to yield 1-deoxy-D-xylulose-5-phosphate (DXP). This Thermosynechococcus vestitus (strain NIES-2133 / IAM M-273 / BP-1) protein is 1-deoxy-D-xylulose-5-phosphate synthase.